Here is a 484-residue protein sequence, read N- to C-terminus: tRNA-2-methylthio-N(6)-dimethylallyladenosine synthase (484 aa).

One can recognise an MTTase N-terminal domain in the interval 36-153; that stretch reads GKLYIKTHGC…LPELIRARRE (118 aa). 6 residues coordinate [4Fe-4S] cluster: Cys-45, Cys-82, Cys-116, Cys-190, Cys-194, and Cys-197. The 240-residue stretch at 176-415 folds into the Radical SAM core domain; it reads RAEGPSAFVS…HISAHAASIS (240 aa). The TRAM domain occupies 416-479; sequence QSMVGSVQRV…SNSLRGRIQL (64 aa). Residues 428-450 form a disordered region; it reads EGPSRRDPNELTGKSENMRPVNF.

Belongs to the methylthiotransferase family. MiaB subfamily. As to quaternary structure, monomer. It depends on [4Fe-4S] cluster as a cofactor.

It is found in the cytoplasm. The enzyme catalyses N(6)-dimethylallyladenosine(37) in tRNA + (sulfur carrier)-SH + AH2 + 2 S-adenosyl-L-methionine = 2-methylsulfanyl-N(6)-dimethylallyladenosine(37) in tRNA + (sulfur carrier)-H + 5'-deoxyadenosine + L-methionine + A + S-adenosyl-L-homocysteine + 2 H(+). Catalyzes the methylthiolation of N6-(dimethylallyl)adenosine (i(6)A), leading to the formation of 2-methylthio-N6-(dimethylallyl)adenosine (ms(2)i(6)A) at position 37 in tRNAs that read codons beginning with uridine. The polypeptide is tRNA-2-methylthio-N(6)-dimethylallyladenosine synthase (Xanthomonas oryzae pv. oryzae (strain MAFF 311018)).